The sequence spans 369 residues: Alanine racemase (369 aa).

K35 (proton acceptor; specific for D-alanine) is an active-site residue. An N6-(pyridoxal phosphate)lysine modification is found at K35. R130 is a binding site for substrate. The active-site Proton acceptor; specific for L-alanine is Y257. M305 contacts substrate.

This sequence belongs to the alanine racemase family. The cofactor is pyridoxal 5'-phosphate.

It carries out the reaction L-alanine = D-alanine. The protein operates within amino-acid biosynthesis; D-alanine biosynthesis; D-alanine from L-alanine: step 1/1. Its function is as follows. Catalyzes the interconversion of L-alanine and D-alanine. May also act on other amino acids. In Paracidovorax citrulli (strain AAC00-1) (Acidovorax citrulli), this protein is Alanine racemase (alr).